The sequence spans 232 residues: Single-stranded DNA-binding protein (232 aa).

The tract at residues 189–232 (DWADEVEENGYVASGSAKASKPRDEESWDEDDEESEEADEDGDF) is disordered. The dimerization and interaction with the viral DNA polymerase and helicase stretch occupies residues 212-232 (DEESWDEDDEESEEADEDGDF). The segment covering 214 to 232 (ESWDEDDEESEEADEDGDF) has biased composition (acidic residues).

The protein belongs to the Teseptimavirus single-stranded DNA-binding protein family. In terms of assembly, homodimer. Interacts (via C-terminus) with the viral DNA polymerase. Interacts with the viral helicase/primase. Part of the replicase complex that includes the DNA polymerase, host thioredoxin, the primase/helicase and the single-stranded DNA binding protein.

Its function is as follows. Single-stranded DNA-binding protein that participates in viral DNA replication, formation of concatemers, recombination and repair of double-stranded breaks. Coats the lagging-strand ssDNA as the replication fork advances and stimulates the activities of viral DNA polymerase and primase/helicase. Coordinates simultaneous synthesis of leading- and lagging-strands. Together with DNA primase/helicase, promotes pairing of two homologous DNA molecules containing complementary single-stranded regions and mediates homologous DNA strand exchange. Also promotes the formation of joint molecules. Disrupts loops, hairpins and other secondary structures present on ssDNA to reduce and eliminate pausing of viral DNA polymerase at specific sites during elongation. The chain is Single-stranded DNA-binding protein from Escherichia phage T7 (Bacteriophage T7).